Here is a 192-residue protein sequence, read N- to C-terminus: Xanthine phosphoribosyltransferase (192 aa).

Xanthine is bound by residues Leu20 and Asn27. Residue 128 to 132 (AQGEA) participates in 5-phospho-alpha-D-ribose 1-diphosphate binding. Lys156 contacts xanthine.

It belongs to the purine/pyrimidine phosphoribosyltransferase family. Xpt subfamily. In terms of assembly, homodimer.

The protein localises to the cytoplasm. It carries out the reaction XMP + diphosphate = xanthine + 5-phospho-alpha-D-ribose 1-diphosphate. The protein operates within purine metabolism; XMP biosynthesis via salvage pathway; XMP from xanthine: step 1/1. Its function is as follows. Converts the preformed base xanthine, a product of nucleic acid breakdown, to xanthosine 5'-monophosphate (XMP), so it can be reused for RNA or DNA synthesis. The polypeptide is Xanthine phosphoribosyltransferase (Lactobacillus helveticus (strain DPC 4571)).